The primary structure comprises 449 residues: UNC93-like protein MFSD11 (449 aa).

Residues L8–C28 traverse the membrane as a helical segment. N40 carries an N-linked (GlcNAc...) asparagine glycan. Helical transmembrane passes span A53–V73, G74–I94, P96–W116, I138–W158, and R170–I190. A Phosphoserine modification is found at S204. The next 6 helical transmembrane spans lie at M239 to V259, L277 to G297, P309 to M329, F359 to L379, A385 to Y405, and L410 to F430.

The protein belongs to the unc-93 family.

The protein localises to the membrane. The protein is UNC93-like protein MFSD11 (MFSD11) of Homo sapiens (Human).